The following is an 86-amino-acid chain: Small ribosomal subunit protein bS20 (86 aa).

Positions 1–11 (MANIKSQIKRN) are enriched in polar residues. The tract at residues 1–20 (MANIKSQIKRNLTNEKRHQA) is disordered.

Belongs to the bacterial ribosomal protein bS20 family.

Its function is as follows. Binds directly to 16S ribosomal RNA. This chain is Small ribosomal subunit protein bS20, found in Acholeplasma laidlawii (strain PG-8A).